We begin with the raw amino-acid sequence, 434 residues long: Glutamate-1-semialdehyde 2,1-aminomutase 1 (434 aa).

An N6-(pyridoxal phosphate)lysine modification is found at lysine 270.

It belongs to the class-III pyridoxal-phosphate-dependent aminotransferase family. HemL subfamily. Homodimer. Pyridoxal 5'-phosphate serves as cofactor.

The protein resides in the cytoplasm. It catalyses the reaction (S)-4-amino-5-oxopentanoate = 5-aminolevulinate. Its pathway is porphyrin-containing compound metabolism; protoporphyrin-IX biosynthesis; 5-aminolevulinate from L-glutamyl-tRNA(Glu): step 2/2. The chain is Glutamate-1-semialdehyde 2,1-aminomutase 1 from Bacillus thuringiensis subsp. konkukian (strain 97-27).